We begin with the raw amino-acid sequence, 196 residues long: Neuropeptide prohormone-4 (196 aa).

An N-terminal signal peptide occupies residues 1-25; sequence MSSPLRMDVTFLLAAIAVTWVCGLK. Residues 50–90 enclose the LDL-receptor class A domain; sequence DCDIASPFKCEESPTCLRLFQVCNGRWDCEHGSDEDNALCA. 3 disulfides stabilise this stretch: cysteine 51–cysteine 65, cysteine 59–cysteine 78, and cysteine 72–cysteine 89.

Expressed by the venom duct.

The protein localises to the secreted. In Conus victoriae (Queen Victoria cone), this protein is Neuropeptide prohormone-4.